Reading from the N-terminus, the 568-residue chain is Periplasmic pectate lyase (568 aa).

A signal peptide spans 1–19; it reads MKRFALSLLAGLVALQASA.

This sequence belongs to the polysaccharide lyase 2 family.

Its subcellular location is the periplasm. The catalysed reaction is Eliminative cleavage of (1-&gt;4)-alpha-D-galacturonan to give oligosaccharides with 4-deoxy-alpha-D-galact-4-enuronosyl groups at their non-reducing ends.. The protein operates within glycan metabolism; pectin degradation; 2-dehydro-3-deoxy-D-gluconate from pectin: step 2/5. This chain is Periplasmic pectate lyase (pelB), found in Pectobacterium carotovorum subsp. carotovorum (Erwinia carotovora subsp. carotovora).